The following is a 422-amino-acid chain: Testin (422 aa).

One can recognise a PET domain in the interval 92–199; that stretch reads MILTSPVAAK…GDVKLPKEVE (108 aa). A disordered region spans residues 135–165; that stretch reads QPVAGSEGAQYRKKQLAKQLPAHDQDPSKCH. The span at 155–165 shows a compositional bias: basic and acidic residues; sequence PAHDQDPSKCH. LIM zinc-binding domains follow at residues 234-299, 300-359, and 360-422; these read YYCF…SEKP, RCAG…NHAV, and SCQG…KMSS.

Belongs to the prickle / espinas / testin family. Expressed in the animal hemisphere at the 4-cell stage. By stage 18, expressed in cells adjacent to the anterior neural plate. In late neurula, expressed in the cranial neural crest. At tail bud stages, expressed strongly in the head, ventral to the developing eye, branchial arches and lateral line placodes. Also localized in the otic vesicle, dorsal fin and notochord with weaker expression at intersomitic junctions of tail bud embryos.

It localises to the cytoplasm. Its subcellular location is the cell cortex. It is found in the cell junction. The protein localises to the focal adhesion. Functionally, scaffold protein that may play a role in cell adhesion, cell spreading and in the reorganization of the actin cytoskeleton. May inhibit cell growth. Regulates cranial neural crest migration. Acts together with prickle1 to control axial elongation. The protein is Testin of Xenopus laevis (African clawed frog).